Consider the following 502-residue polypeptide: Glycerol kinase (502 aa).

Threonine 14 is an ADP binding site. ATP-binding residues include threonine 14, threonine 15, and serine 16. Threonine 14 is a sn-glycerol 3-phosphate binding site. Position 18 (arginine 18) interacts with ADP. The sn-glycerol 3-phosphate site is built by arginine 84, glutamate 85, tyrosine 136, and aspartate 246. Positions 84, 85, 136, 246, and 247 each coordinate glycerol. Residues threonine 268 and glycine 311 each coordinate ADP. Residues threonine 268, glycine 311, glutamine 315, and glycine 412 each contribute to the ATP site. ADP is bound by residues glycine 412 and asparagine 416.

This sequence belongs to the FGGY kinase family. In terms of assembly, homotetramer and homodimer (in equilibrium). Heterodimer with EIIA-Glc. Binds 1 zinc ion per glycerol kinase EIIA-Glc dimer. The zinc ion is important for dimerization.

It catalyses the reaction glycerol + ATP = sn-glycerol 3-phosphate + ADP + H(+). Its pathway is polyol metabolism; glycerol degradation via glycerol kinase pathway; sn-glycerol 3-phosphate from glycerol: step 1/1. With respect to regulation, activity of this regulatory enzyme is affected by several metabolites. Allosterically and non-competitively inhibited by fructose 1,6-bisphosphate (FBP) and unphosphorylated phosphocarrier protein EIIA-Glc (III-Glc), an integral component of the bacterial phosphotransferase (PTS) system. In terms of biological role, key enzyme in the regulation of glycerol uptake and metabolism. Catalyzes the phosphorylation of glycerol to yield sn-glycerol 3-phosphate. The sequence is that of Glycerol kinase from Escherichia coli O8 (strain IAI1).